A 418-amino-acid chain; its full sequence is Thyroid hormone receptor alpha (418 aa).

The tract at residues methionine 1 to serine 41 is disordered. The tract at residues methionine 1–proline 60 is modulating. Residues cysteine 61, cysteine 64, cysteine 78, cysteine 81, cysteine 99, cysteine 105, cysteine 115, and cysteine 118 each coordinate Zn(2+). 2 NR C4-type zinc fingers span residues cysteine 61 to cysteine 81 and cysteine 99 to cysteine 123. Residues cysteine 61 to aspartate 135 constitute a DNA-binding region (nuclear receptor). The region spanning glutamate 171 to aspartate 415 is the NR LBD domain. Residues arginine 236 and serine 285 each contribute to the 3,3',5-triiodo-L-thyronine site.

It belongs to the nuclear hormone receptor family. NR1 subfamily. In terms of tissue distribution, highest level of expression in erythrocytes. Also expressed in liver, tail, eye, muscle and skin.

The protein localises to the nucleus. In terms of biological role, nuclear hormone receptor that can act as a repressor or activator of transcription. High affinity receptor for thyroid hormones, including triiodothyronine and thyroxine. The chain is Thyroid hormone receptor alpha (thra) from Aquarana catesbeiana (American bullfrog).